We begin with the raw amino-acid sequence, 229 residues long: C-type lectin domain family 1 member B (229 aa).

At 1–33 (MQDEDGYITLNIKTRKPALISVGSASSSWWRVM) the chain is on the cytoplasmic side. At tyrosine 7 the chain carries Phosphotyrosine. The ITAM motif lies at 7 to 10 (YITL). The chain crosses the membrane as a helical; Signal-anchor for type II membrane protein span at residues 34–54 (ALILLILCVGMVVGLVALGIW). Residues 55–229 (SVMQRNYLQG…AGMTKVDQLP (175 aa)) lie on the Extracellular side of the membrane. N-linked (GlcNAc...) asparagine glycosylation occurs at asparagine 68. A disulfide bridge connects residues cysteine 102 and cysteine 113. The region spanning 109 to 217 (YGDSCYGFFR…CENKHYLMCE (109 aa)) is the C-type lectin domain. Residues asparagine 120 and asparagine 134 are each glycosylated (N-linked (GlcNAc...) asparagine). 2 disulfides stabilise this stretch: cysteine 130-cysteine 216 and cysteine 195-cysteine 208.

In terms of assembly, homodimer. Interacts (via cytoplasmic domain) with RACK1; promotes CLEC1B ubiquitination and proteasome-mediated degradation. Interacts (dimer) with SYK (via SH2 domains). Interacts with PDPN; the interaction is independent of CLEC1B glycosylation and activates CLEC1B. Glycosylated. In terms of processing, phosphorylated on tyrosine residue in response to rhodocytin binding. In terms of tissue distribution, expressed preferentially in the liver. Also expressed in immune cells of myeloid origin and on the surface of platelets.

Its subcellular location is the membrane. Its function is as follows. C-type lectin-like receptor that functions as a platelet receptor for the lymphatic endothelial marker, PDPN. After ligand activation, signals via sequential activation of SRC and SYK tyrosine kinases leading to activation of PLCG2. Functionally, (Microbial infection) Acts as a receptor for the platelet-aggregating snake venom protein rhodocytin. Rhodocytin binding leads to tyrosine phosphorylation and this promotes the binding of spleen tyrosine kinase (SYK) and initiation of downstream tyrosine phosphorylation events and activation of PLCG2. (Microbial infection) Acts as an attachment factor for Human immunodeficiency virus type 1 (HIV-1) and facilitates its capture by platelets. This Homo sapiens (Human) protein is C-type lectin domain family 1 member B (CLEC1B).